The chain runs to 281 residues: Apulose-4-phosphate transketolase subunit A (281 aa).

This sequence belongs to the transketolase family. In terms of assembly, probable heterodimer composed of AptA and AptB. Requires thiamine diphosphate as cofactor.

It catalyses the reaction apulose 4-phosphate + D-glyceraldehyde 3-phosphate = D-xylulose 5-phosphate + dihydroxyacetone phosphate. It participates in carbohydrate metabolism. Its function is as follows. Involved in catabolism of D-apiose. Catalyzes the transfer of the glycolaldehyde group from apulose-4-phosphate to D-glyceraldehyde 3-phosphate, generating dihydroxyacetone phosphate and D-xylulose-5-phosphate. This Phocaeicola vulgatus (strain ATCC 8482 / DSM 1447 / JCM 5826 / CCUG 4940 / NBRC 14291 / NCTC 11154) (Bacteroides vulgatus) protein is Apulose-4-phosphate transketolase subunit A.